We begin with the raw amino-acid sequence, 389 residues long: Chalcone synthase 1A (389 aa).

Residue Cys164 is part of the active site.

The protein belongs to the thiolase-like superfamily. Chalcone/stilbene synthases family.

It catalyses the reaction (E)-4-coumaroyl-CoA + 3 malonyl-CoA + 3 H(+) = 2',4,4',6'-tetrahydroxychalcone + 3 CO2 + 4 CoA. Its pathway is secondary metabolite biosynthesis; flavonoid biosynthesis. Functionally, the primary product of this enzyme is 4,2',4',6'-tetrahydroxychalcone (also termed naringenin-chalcone or chalcone) which can under specific conditions spontaneously isomerize into naringenin. This Pisum sativum (Garden pea) protein is Chalcone synthase 1A (CHS-1A).